Consider the following 217-residue polypeptide: Orotate phosphoribosyltransferase (217 aa).

5-phospho-alpha-D-ribose 1-diphosphate is bound at residue Lys26. Position 34–35 (34–35 (FF)) interacts with orotate. Residues 72–73 (YK), Arg99, Lys100, Lys103, His105, and 124–132 (DDVITAGTA) contribute to the 5-phospho-alpha-D-ribose 1-diphosphate site. 2 residues coordinate orotate: Thr128 and Arg156.

This sequence belongs to the purine/pyrimidine phosphoribosyltransferase family. PyrE subfamily. Homodimer. Requires Mg(2+) as cofactor.

The catalysed reaction is orotidine 5'-phosphate + diphosphate = orotate + 5-phospho-alpha-D-ribose 1-diphosphate. Its pathway is pyrimidine metabolism; UMP biosynthesis via de novo pathway; UMP from orotate: step 1/2. In terms of biological role, catalyzes the transfer of a ribosyl phosphate group from 5-phosphoribose 1-diphosphate to orotate, leading to the formation of orotidine monophosphate (OMP). In Aeromonas salmonicida (strain A449), this protein is Orotate phosphoribosyltransferase.